The following is a 249-amino-acid chain: Triosephosphate isomerase (249 aa).

2 residues coordinate substrate: N12 and K14. N6-acetyllysine is present on K14. Y68 carries the post-translational modification 3'-nitrotyrosine. A Phosphoserine modification is found at S80. H96 (electrophile) is an active-site residue. S106 is modified (phosphoserine). A Glycyl lysine isopeptide (Lys-Gly) (interchain with G-Cter in SUMO1) cross-link involves residue K142. K149 carries the N6-succinyllysine modification. K156 bears the N6-acetyllysine; alternate mark. K156 carries the N6-succinyllysine; alternate modification. A Phosphoserine modification is found at S159. E166 serves as the catalytic Proton acceptor. Position 173 is a phosphothreonine (T173). Residue K194 is modified to N6-acetyllysine; alternate. N6-succinyllysine; alternate is present on K194. Position 194 is an N6-methyllysine; alternate (K194). S198 is subject to Phosphoserine. Y209 is modified (3'-nitrotyrosine). A Phosphoserine modification is found at S212. A Phosphothreonine modification is found at T214. At S223 the chain carries Phosphoserine. Position 238 is an N6-acetyllysine (K238).

This sequence belongs to the triosephosphate isomerase family. Homodimer.

Its subcellular location is the cytoplasm. The enzyme catalyses dihydroxyacetone phosphate = methylglyoxal + phosphate. It catalyses the reaction D-glyceraldehyde 3-phosphate = dihydroxyacetone phosphate. It functions in the pathway carbohydrate degradation; glycolysis; D-glyceraldehyde 3-phosphate from glycerone phosphate: step 1/1. It participates in carbohydrate biosynthesis; gluconeogenesis. In terms of biological role, triosephosphate isomerase is an extremely efficient metabolic enzyme that catalyzes the interconversion between dihydroxyacetone phosphate (DHAP) and D-glyceraldehyde-3-phosphate (G3P) in glycolysis and gluconeogenesis. Functionally, it is also responsible for the non-negligible production of methylglyoxal a reactive cytotoxic side-product that modifies and can alter proteins, DNA and lipids. In Macaca fascicularis (Crab-eating macaque), this protein is Triosephosphate isomerase (TPI1).